We begin with the raw amino-acid sequence, 217 residues long: Somatotropin (217 aa).

An N-terminal signal peptide occupies residues methionine 1–glycine 26. Histidine 46 lines the Zn(2+) pocket. Residues cysteine 79 and cysteine 190 are joined by a disulfide bond. The residue at position 132 (serine 132) is a Phosphoserine. Glutamate 199 is a Zn(2+) binding site. Cysteine 207 and cysteine 215 are joined by a disulfide.

The protein belongs to the somatotropin/prolactin family.

The protein resides in the secreted. Functionally, plays an important role in growth control. Its major role in stimulating body growth is to stimulate the liver and other tissues to secrete IGF1. It stimulates both the differentiation and proliferation of myoblasts. It also stimulates amino acid uptake and protein synthesis in muscle and other tissues. The protein is Somatotropin (GH1) of Bos taurus (Bovine).